The chain runs to 458 residues: Adenylosuccinate synthetase (458 aa).

Residues 17 to 23 and 45 to 47 contribute to the GTP site; these read GDEGKGK and GHT. Asp18 acts as the Proton acceptor in catalysis. 2 residues coordinate Mg(2+): Asp18 and Gly45. IMP-binding positions include 18-21, 43-46, Thr137, Arg151, Gln247, Thr262, and Arg330; these read DEGK and NAGH. The active-site Proton donor is His46. 326–332 contacts substrate; that stretch reads VTTGRSR. Residues Arg332, 358 to 360, and 440 to 442 contribute to the GTP site; these read KLD and STS.

It belongs to the adenylosuccinate synthetase family. As to quaternary structure, homodimer. Mg(2+) is required as a cofactor.

Its subcellular location is the cytoplasm. The catalysed reaction is IMP + L-aspartate + GTP = N(6)-(1,2-dicarboxyethyl)-AMP + GDP + phosphate + 2 H(+). It functions in the pathway purine metabolism; AMP biosynthesis via de novo pathway; AMP from IMP: step 1/2. Functionally, plays an important role in the de novo pathway of purine nucleotide biosynthesis. Catalyzes the first committed step in the biosynthesis of AMP from IMP. This chain is Adenylosuccinate synthetase, found in Delftia acidovorans (strain DSM 14801 / SPH-1).